The chain runs to 117 residues: UPF0145 protein PH1682 (117 aa).

The protein belongs to the UPF0145 family.

The sequence is that of UPF0145 protein PH1682 from Pyrococcus horikoshii (strain ATCC 700860 / DSM 12428 / JCM 9974 / NBRC 100139 / OT-3).